A 325-amino-acid chain; its full sequence is Protein SAR DEFICIENT 4 (325 aa).

The transit peptide at methionine 1–arginine 42 directs the protein to the chloroplast.

It belongs to the ornithine cyclodeaminase/mu-crystallin family.

Its subcellular location is the plastid. It localises to the chloroplast. In terms of biological role, involved in the biosynthesis of pipecolate (Pip), a metabolite that orchestrates defense amplification, positive regulation of salicylic acid (SA) biosynthesis, and priming to guarantee effective local resistance induction and the establishment of systemic acquired resistance (SAR). Converts delta-(1)-piperideine-2-carboxylate (P2C) to Pip. Mediates reduction of P2C and biosynthesis of Pip in systemic tissue and contributes to SAR establishment. Does not possess ornithine cyclodeaminase activity in vitro. This is Protein SAR DEFICIENT 4 from Arabidopsis thaliana (Mouse-ear cress).